The following is a 310-amino-acid chain: Olfactory receptor 5P80 (310 aa).

At 1-25 (MEPGNYTVVTEVILLGFTEDAIIRA) the chain is on the extracellular side. N-linked (GlcNAc...) asparagine glycosylation is present at Asn-5. Residues 26 to 46 (ILFIVFLIIYSVTLMGNASII) traverse the membrane as a helical segment. At 47 to 54 (MLIRRSPQ) the chain is on the cytoplasmic side. Residues 55–75 (LHTPMYLLLSHLAFVDIGYSS) form a helical membrane-spanning segment. The Extracellular portion of the chain corresponds to 76 to 99 (SVTPIMLKGFLRKETFILVSGCVA). A disulfide bridge links Cys-97 with Cys-189. The chain crosses the membrane as a helical span at residues 100–120 (QLCSVVTFGSTECFLLAAMAY). Topologically, residues 121–133 (DRYVAICSPLLYA) are cytoplasmic. A helical membrane pass occupies residues 134–154 (TQMSSTVCILLVGASYLGGCV). The Extracellular segment spans residues 155–196 (NAWTFTGCLLNLSFCRPNKVNHFFCDYSPLLKISCSHDFSSE). A glycan (N-linked (GlcNAc...) asparagine) is linked at Asn-165. Residues 197-217 (VIPAISSGSIIVVTVFIIALS) form a helical membrane-spanning segment. Residues 218 to 237 (YVYILVSILKMRSTEGRQKA) are Cytoplasmic-facing. Residues 238 to 258 (FSTCTSHLTAVTLFYGTITFI) traverse the membrane as a helical segment. The Extracellular portion of the chain corresponds to 259-271 (YVMPKSSYSTDQN). A helical transmembrane segment spans residues 272–292 (KVVSVFYTVVIPMLNPIIYSL). At 293–310 (RNKDVKEAMKKLMANTHH) the chain is on the cytoplasmic side.

This sequence belongs to the G-protein coupled receptor 1 family.

The protein resides in the cell membrane. Its function is as follows. Potential odorant receptor. The protein is Olfactory receptor 5P80 of Mus musculus (Mouse).